Reading from the N-terminus, the 210-residue chain is Proteasome subunit beta (210 aa).

A propeptide spans methionine 1–glycine 7 (removed in mature form; by autocatalysis). The active-site Nucleophile is threonine 8.

This sequence belongs to the peptidase T1B family. As to quaternary structure, the 20S proteasome core is composed of 14 alpha and 14 beta subunits that assemble into four stacked heptameric rings, resulting in a barrel-shaped structure. The two inner rings, each composed of seven catalytic beta subunits, are sandwiched by two outer rings, each composed of seven alpha subunits. The catalytic chamber with the active sites is on the inside of the barrel. Has a gated structure, the ends of the cylinder being occluded by the N-termini of the alpha-subunits. Is capped at one or both ends by the proteasome regulatory ATPase, PAN.

It localises to the cytoplasm. It carries out the reaction Cleavage of peptide bonds with very broad specificity.. The formation of the proteasomal ATPase PAN-20S proteasome complex, via the docking of the C-termini of PAN into the intersubunit pockets in the alpha-rings, triggers opening of the gate for substrate entry. Interconversion between the open-gate and close-gate conformations leads to a dynamic regulation of the 20S proteasome proteolysis activity. Component of the proteasome core, a large protease complex with broad specificity involved in protein degradation. The protein is Proteasome subunit beta of Picrophilus torridus (strain ATCC 700027 / DSM 9790 / JCM 10055 / NBRC 100828 / KAW 2/3).